The chain runs to 138 residues: Large ribosomal subunit protein uL16 (138 aa).

Positions methionine 1 to glycine 15 are enriched in basic residues. Positions methionine 1–glutamate 20 are disordered.

Belongs to the universal ribosomal protein uL16 family. Part of the 50S ribosomal subunit.

Binds 23S rRNA and is also seen to make contacts with the A and possibly P site tRNAs. This Borrelia hermsii (strain HS1 / DAH) protein is Large ribosomal subunit protein uL16.